A 179-amino-acid chain; its full sequence is GTP-dependent dephospho-CoA kinase (179 aa).

Asp-55, Val-57, Asp-74, Lys-76, and Glu-128 together coordinate GTP.

This sequence belongs to the GTP-dependent DPCK family.

It carries out the reaction 3'-dephospho-CoA + GTP = GDP + CoA + H(+). It participates in cofactor biosynthesis; coenzyme A biosynthesis. Its function is as follows. Catalyzes the GTP-dependent phosphorylation of the 3'-hydroxyl group of dephosphocoenzyme A to form coenzyme A (CoA). This chain is GTP-dependent dephospho-CoA kinase, found in Saccharolobus solfataricus (strain ATCC 35092 / DSM 1617 / JCM 11322 / P2) (Sulfolobus solfataricus).